The following is a 132-amino-acid chain: Small ribosomal subunit protein uS8 (132 aa).

It belongs to the universal ribosomal protein uS8 family. In terms of assembly, part of the 30S ribosomal subunit. Contacts proteins S5 and S12.

One of the primary rRNA binding proteins, it binds directly to 16S rRNA central domain where it helps coordinate assembly of the platform of the 30S subunit. The polypeptide is Small ribosomal subunit protein uS8 (Aliarcobacter butzleri (strain RM4018) (Arcobacter butzleri)).